A 520-amino-acid chain; its full sequence is 2-isopropylmalate synthase (520 aa).

Positions Val-4 to Val-266 constitute a Pyruvate carboxyltransferase domain. Residues Asp-13, His-201, His-203, and Asn-237 each contribute to the Mn(2+) site. A regulatory domain region spans residues His-390–Asn-520.

The protein belongs to the alpha-IPM synthase/homocitrate synthase family. LeuA type 1 subfamily. Homodimer. Requires Mn(2+) as cofactor.

Its subcellular location is the cytoplasm. It carries out the reaction 3-methyl-2-oxobutanoate + acetyl-CoA + H2O = (2S)-2-isopropylmalate + CoA + H(+). The protein operates within amino-acid biosynthesis; L-leucine biosynthesis; L-leucine from 3-methyl-2-oxobutanoate: step 1/4. In terms of biological role, catalyzes the condensation of the acetyl group of acetyl-CoA with 3-methyl-2-oxobutanoate (2-ketoisovalerate) to form 3-carboxy-3-hydroxy-4-methylpentanoate (2-isopropylmalate). This chain is 2-isopropylmalate synthase, found in Streptococcus gallolyticus (strain UCN34).